The sequence spans 142 residues: MKTQSAKPAEVTHDWYIVDAEGKTLGRLATQIAARLRGKHKPSFTPHVDTGDYIVVINADKIAVTGKKAQDKKYYRHSGYPGGIKETNFTKLIAHKPEEVLLKAVKGMLPKGPLGYATIKKLKLYAGTEHPHAAQQPKELDI.

Belongs to the universal ribosomal protein uL13 family. In terms of assembly, part of the 50S ribosomal subunit.

Its function is as follows. This protein is one of the early assembly proteins of the 50S ribosomal subunit, although it is not seen to bind rRNA by itself. It is important during the early stages of 50S assembly. The sequence is that of Large ribosomal subunit protein uL13 from Psychrobacter sp. (strain PRwf-1).